The chain runs to 404 residues: MADKVLKEKRRLFVRSVAMGTINGLLDELLETRVLNQEEVEIVRGENATVMDKARALIDSVIRKGPQACQICINHICGDDPHLAGVLELSTGSQSGKCLTVQESQAVVPPFPAPQTVQDNPVKPASSEPRGSLKLCPPDIAQRLWKEKSAEIYPIMGKSIRTRLALIICNTEFENLPRRDGADVDIRDMKILLEDLGYSVDVRENLTASDMAIELKAFAARPEHKSSDSTFLVLMSHGIQAGICGKKYSEEVPDVLEVNTVFQILNTLNCPSLKDKPKVIIIQACRGEKQGVVWIKDSVGPSGNSSLLAAEDFEYDAIKKAHIEKDFIAFCSSTPDNVSWRHPLLGSLFIIKLIKILQEHAWSCGLEEIFRKVRFSFELADGRAQMPTAERVTLTRSFYLFPGH.

The region spanning 1–91 is the CARD domain; sequence MADKVLKEKR…HLAGVLELST (91 aa). A propeptide spanning residues 1–119 is cleaved from the precursor; it reads MADKVLKEKR…PFPAPQTVQD (119 aa). The interval 111 to 132 is disordered; it reads FPAPQTVQDNPVKPASSEPRGS. Catalysis depends on residues His237 and Cys285. Residues 298–316 constitute a propeptide that is removed on maturation; that stretch reads SVGPSGNSSLLAAEDFEYD. Position 302 is a phosphoserine (Ser302).

It belongs to the peptidase C14A family. Heterotetramer that consists of two anti-parallel arranged heterodimers, each one formed by a 20 kDa (Caspase-1 subunit p20) and a 10 kDa (Caspase-1 subunit p10) subunit. May be a component of the inflammasome, a protein complex which also includes PYCARD, CARD8 and NLRP2 and whose function would be the activation of pro-inflammatory caspases. Component of the AIM2 PANoptosome complex, a multiprotein complex that drives inflammatory cell death (PANoptosis). Both the p10 and p20 subunits interact with MEFV. Interacts with CARD17P/INCA and CARD18. Interacts with SERPINB1; this interaction regulates CASP1 activity. As to quaternary structure, heterotetramer that consists of two anti-parallel arranged heterodimers, each one formed by a 20 kDa (Caspase-1 subunit p20) and a 10 kDa (Caspase-1 subunit p10) subunit. Post-translationally, the two subunits are derived from the precursor sequence by an autocatalytic mechanism. In terms of processing, ubiquitinated via 'Lys-11'-linked polyubiquitination. Deubiquitinated by USP8.

Its subcellular location is the cytoplasm. The protein resides in the cell membrane. The enzyme catalyses Strict requirement for an Asp residue at position P1 and has a preferred cleavage sequence of Tyr-Val-Ala-Asp-|-.. Its function is as follows. Thiol protease involved in a variety of inflammatory processes by proteolytically cleaving other proteins, such as the precursors of the inflammatory cytokines interleukin-1 beta (IL1B) and interleukin 18 (IL18) as well as the pyroptosis inducer Gasdermin-D (GSDMD), into active mature peptides. Plays a key role in cell immunity as an inflammatory response initiator: once activated through formation of an inflammasome complex, it initiates a pro-inflammatory response through the cleavage of the two inflammatory cytokines IL1B and IL18, releasing the mature cytokines which are involved in a variety of inflammatory processes. Cleaves a tetrapeptide after an Asp residue at position P1. Also initiates pyroptosis, a programmed lytic cell death pathway, through cleavage of GSDMD. In contrast to cleavage of interleukin IL1B, recognition and cleavage of GSDMD is not strictly dependent on the consensus cleavage site but depends on an exosite interface on CASP1 that recognizes and binds the Gasdermin-D, C-terminal (GSDMD-CT) part. Cleaves and activates CASP7 in response to bacterial infection, promoting plasma membrane repair. Upon inflammasome activation, during DNA virus infection but not RNA virus challenge, controls antiviral immunity through the cleavage of CGAS, rendering it inactive. In apoptotic cells, cleaves SPHK2 which is released from cells and remains enzymatically active extracellularly. This chain is Caspase-1 (CASP1), found in Sus scrofa (Pig).